A 510-amino-acid chain; its full sequence is NAD(P)H-quinone oxidoreductase subunit 2 A, chloroplastic (510 aa).

A run of 13 helical transmembrane segments spans residues 24-44, 57-77, 99-119, 124-144, 149-169, 183-203, 227-247, 295-315, 323-343, 354-374, 395-415, 418-438, and 484-504; these read LLLF…GLIL, IPWL…ALLF, IFQF…VEYI, MAIT…MFLC, LITI…LSGY, YLLM…WLYG, PGIS…LSPA, WHLL…LIAI, MLAY…IVGD, YMLF…SFGL, ALSL…AGFF, LHLF…IGLL, and MIVC…IIAI.

This sequence belongs to the complex I subunit 2 family. As to quaternary structure, NDH is composed of at least 16 different subunits, 5 of which are encoded in the nucleus.

The protein localises to the plastid. The protein resides in the chloroplast thylakoid membrane. The catalysed reaction is a plastoquinone + NADH + (n+1) H(+)(in) = a plastoquinol + NAD(+) + n H(+)(out). The enzyme catalyses a plastoquinone + NADPH + (n+1) H(+)(in) = a plastoquinol + NADP(+) + n H(+)(out). Functionally, NDH shuttles electrons from NAD(P)H:plastoquinone, via FMN and iron-sulfur (Fe-S) centers, to quinones in the photosynthetic chain and possibly in a chloroplast respiratory chain. The immediate electron acceptor for the enzyme in this species is believed to be plastoquinone. Couples the redox reaction to proton translocation, and thus conserves the redox energy in a proton gradient. The chain is NAD(P)H-quinone oxidoreductase subunit 2 A, chloroplastic from Carica papaya (Papaya).